Reading from the N-terminus, the 360-residue chain is DNA replication and repair protein RecF (360 aa).

ATP is bound at residue 30 to 37 (GENGAGKT).

This sequence belongs to the RecF family.

It is found in the cytoplasm. The RecF protein is involved in DNA metabolism; it is required for DNA replication and normal SOS inducibility. RecF binds preferentially to single-stranded, linear DNA. It also seems to bind ATP. This is DNA replication and repair protein RecF from Deinococcus deserti (strain DSM 17065 / CIP 109153 / LMG 22923 / VCD115).